A 27-amino-acid chain; its full sequence is Trichocyst matrix protein T4-C (27 aa).

The protein belongs to the TMP family.

The protein resides in the trichocyst. In terms of biological role, structural protein that crystallize inside the trichocyst matrix. The protein is Trichocyst matrix protein T4-C (T4C) of Paramecium tetraurelia.